Consider the following 256-residue polypeptide: Thiazole synthase (256 aa).

The Schiff-base intermediate with DXP role is filled by Lys-96. 1-deoxy-D-xylulose 5-phosphate-binding positions include Gly-157, Ala-184–Gly-185, and Asn-206–Thr-207.

The protein belongs to the ThiG family. Homotetramer. Forms heterodimers with either ThiH or ThiS.

The protein localises to the cytoplasm. It carries out the reaction [ThiS sulfur-carrier protein]-C-terminal-Gly-aminoethanethioate + 2-iminoacetate + 1-deoxy-D-xylulose 5-phosphate = [ThiS sulfur-carrier protein]-C-terminal Gly-Gly + 2-[(2R,5Z)-2-carboxy-4-methylthiazol-5(2H)-ylidene]ethyl phosphate + 2 H2O + H(+). Its pathway is cofactor biosynthesis; thiamine diphosphate biosynthesis. In terms of biological role, catalyzes the rearrangement of 1-deoxy-D-xylulose 5-phosphate (DXP) to produce the thiazole phosphate moiety of thiamine. Sulfur is provided by the thiocarboxylate moiety of the carrier protein ThiS. In vitro, sulfur can be provided by H(2)S. The chain is Thiazole synthase from Brucella melitensis biotype 2 (strain ATCC 23457).